Reading from the N-terminus, the 950-residue chain is MLSKLLRVGEGRMVKRLKKVADYVESLSGDVEKLTDAELRAKTDEFKKRHAEGESLDELLPEAFAVAREAAWRVLGQRPFEVQLMGAAALHLGNVAEMKTGEGKTLTSVLPAYLNGIGGKGVHIVTVNDYLAKRDSEWMGRVHRFLGLDVGVILAQMTPEERRVAYNADITYGTNNEFGFDYLRDNMAHTLDDCVQRGHNFVIVDEVDSILIDEARTPLIISGPADGSSNWYTEFARLAPLMEKDTHYEVDLRKRTVGVHELGVEFVEDQLGIDNLYEAANSPLVSYLNNALKAKELFNRDKDYIVRNGEVLIVDEFTGRVLIGRRYSEGMHQAIEAKEHVEIKAENQTLATITLQNYFRLYNKHAGMTGTAQTEAAELHEIYKLGVVPIPTNRPMVREDQSDLIYKTEEAKYIAVVDDVAERYEKGQPVLIGTTSVERSEYLSRQFTKRRIPHNVLNAKYHEQEAGIIAEAGRRGAITVATNMAGRGTDIVLGGNVDFLTDKRLRDNGLDPVETPDEYEQAWHQELPKVKEEAGDEATEVIKAGGLYVLGTERHESRRIDNQLRGRSGRQGDPGESRFYLSLGDELMRRFNGAALESLLTRLNLPDDVPIEAKMVTRAIKSAQTQVEQQNFEVRKNVLKYDEVMNQQRKVIYAERRRILEGENLQQQVKDMLTDVITAYVDGATVEGYAEDWDLDALWTALKTLYPVGIKTDTLMRRDQDSDRDDLTRDELLQALLQDADQAYAAREAELEELAGEGAMRQLERNVLLNVIDRKWREHLYEMDYLKEGIGLRAMAQRDPLVEYQREGYDMFMAMLDGVKEESVGFLFNVSVEAVPAPQVEVAPVAEPEDLAEFATAAAAAAQEGGAGRKNAAAREEAPSRLRAKGIEDESPALTYSGPSEDGSAQVQRNGGGAAKTPAGVPAGRSRRERREAARRQGRGAKPPKSVKKR.

ATP is bound by residues Gln83, 101–105 (GEGKT), and Asp490. Residues 864-950 (EGGAGRKNAA…AKPPKSVKKR (87 aa)) are disordered. The segment covering 873-888 (AAREEAPSRLRAKGIE) has biased composition (basic and acidic residues).

Belongs to the SecA family. Monomer and homodimer. Part of the essential Sec protein translocation apparatus which comprises SecA, SecYEG and auxiliary proteins SecDF. Other proteins may also be involved.

It is found in the cell membrane. It localises to the cytoplasm. The catalysed reaction is ATP + H2O + cellular proteinSide 1 = ADP + phosphate + cellular proteinSide 2.. Functionally, part of the Sec protein translocase complex. Interacts with the SecYEG preprotein conducting channel. Has a central role in coupling the hydrolysis of ATP to the transfer of proteins into and across the cell membrane, serving as an ATP-driven molecular motor driving the stepwise translocation of polypeptide chains across the membrane. This chain is Protein translocase subunit SecA 1, found in Mycobacterium ulcerans (strain Agy99).